The chain runs to 92 residues: Small ribosomal subunit protein uS19c (92 aa).

Belongs to the universal ribosomal protein uS19 family.

The protein resides in the plastid. It is found in the chloroplast. Functionally, protein S19 forms a complex with S13 that binds strongly to the 16S ribosomal RNA. This Nicotiana sylvestris (Wood tobacco) protein is Small ribosomal subunit protein uS19c.